The chain runs to 425 residues: uncharacterized protein (425 aa).

This is an uncharacterized protein from Salmonella typhimurium (strain LT2 / SGSC1412 / ATCC 700720).